The sequence spans 182 residues: Ribosome-recycling factor (182 aa).

Residues 136–160 are disordered; that stretch reads VKKSEKDGDLSEDQSRDEQEKIQKE.

This sequence belongs to the RRF family.

Its subcellular location is the cytoplasm. In terms of biological role, responsible for the release of ribosomes from messenger RNA at the termination of protein biosynthesis. May increase the efficiency of translation by recycling ribosomes from one round of translation to another. The protein is Ribosome-recycling factor of Prochlorococcus marinus (strain NATL1A).